A 238-amino-acid polypeptide reads, in one-letter code: Sugar fermentation stimulation protein homolog (238 aa).

The protein belongs to the SfsA family.

The chain is Sugar fermentation stimulation protein homolog from Histophilus somni (strain 2336) (Haemophilus somnus).